The sequence spans 1076 residues: Nickel and cobalt resistance protein CnrA (1076 aa).

Transmembrane regions (helical) follow at residues 14–34 (WLVLFLTAVVAVIGAWQLNLL), 366–386 (TVAKNLIEGALLVVAILFALL), 390–410 (RAATIAALVIPLSLLVSAIGM), 418–438 (NLMSLGALDFGLIIDGAVIIV), 475–495 (PTVYGQLVIFMVFLPCLTFQG), 502–522 (SPMVITLMLALASAFVLSLTF), 561–581 (PMPFIGAGIATVAVATVAFTF), 903–923 (RLAIIVPLCFILIAATLYMAI), 928–948 (LTATVLTAVPLALAGGVFALL), 959–979 (AVGFIAVSGVAVLNGLVLISA), 1003–1023 (RPVLMTALVASLGFVPMAIAT), and 1035–1055 (TVVIGGLVTATVLTLFVLPAL).

Belongs to the resistance-nodulation-cell division (RND) (TC 2.A.6) family.

The protein localises to the cell inner membrane. Its function is as follows. The products of the genes cnrA, cnrB, and cnrC are likely to form a membrane-bound protein complex catalyzing an energy-dependent efflux of Ni(2+) and Co(2+). The mechanism of action of the CnrCBA complex may be that of a proton/cation antiporter. The sequence is that of Nickel and cobalt resistance protein CnrA (cnrA) from Cupriavidus metallidurans (strain ATCC 43123 / DSM 2839 / NBRC 102507 / CH34) (Ralstonia metallidurans).